The sequence spans 497 residues: Glycerol kinase (497 aa).

Residue Thr-12 participates in ADP binding. Residues Thr-12, Thr-13, and Ser-14 each coordinate ATP. Thr-12 contributes to the sn-glycerol 3-phosphate binding site. Position 16 (Arg-16) interacts with ADP. The sn-glycerol 3-phosphate site is built by Arg-82, Glu-83, Tyr-134, and Asp-243. Residues Arg-82, Glu-83, Tyr-134, Asp-243, and Gln-244 each contribute to the glycerol site. Residues Thr-265 and Gly-308 each contribute to the ADP site. Residues Thr-265, Gly-308, Gln-312, and Gly-411 each contribute to the ATP site. Gly-411 provides a ligand contact to ADP.

The protein belongs to the FGGY kinase family.

The catalysed reaction is glycerol + ATP = sn-glycerol 3-phosphate + ADP + H(+). Its pathway is polyol metabolism; glycerol degradation via glycerol kinase pathway; sn-glycerol 3-phosphate from glycerol: step 1/1. With respect to regulation, inhibited by fructose 1,6-bisphosphate (FBP). Functionally, key enzyme in the regulation of glycerol uptake and metabolism. Catalyzes the phosphorylation of glycerol to yield sn-glycerol 3-phosphate. In Xanthobacter autotrophicus (strain ATCC BAA-1158 / Py2), this protein is Glycerol kinase.